A 365-amino-acid chain; its full sequence is Putative F-box/kelch-repeat protein At4g39290 (365 aa).

An F-box domain is found at 10–58 (QMTFSMLPDDLVLNCLARVSKVYYPSLSFVSKKFRSLIASTELQELRSF). Kelch repeat units follow at residues 118–165 (DIYA…CVLN) and 167–213 (KIYV…KIVG).

This Arabidopsis thaliana (Mouse-ear cress) protein is Putative F-box/kelch-repeat protein At4g39290.